A 258-amino-acid polypeptide reads, in one-letter code: MPVLTMKQLLEAGVHFGHQTRRWNPKMAEYIFTERNGIYIIDLQKTVKKMDEAYEFVKSQVQEGKIILFVGTKKQAQETIKEEAERCGMYYINQRWLGGLLTNFRTIKTRIERLKELQRMEEDGTFDVLPKKEVNLLRKEKERLLKYLGGIQNMPRIPDILYIVDPRKERNAVLEARKLGIPIVAIVDTNCDPDEIDYVIPGNDDAIRAVKLITSKIADAVIEGKEGEQFAPASEQKEEVKTQEVQEVEDSNDDVIDD.

The tract at residues 227–258 is disordered; the sequence is GEQFAPASEQKEEVKTQEVQEVEDSNDDVIDD. The segment covering 235-244 has biased composition (basic and acidic residues); sequence EQKEEVKTQE. Residues 246 to 258 show a composition bias toward acidic residues; it reads QEVEDSNDDVIDD.

Belongs to the universal ribosomal protein uS2 family.

This chain is Small ribosomal subunit protein uS2, found in Caldicellulosiruptor saccharolyticus (strain ATCC 43494 / DSM 8903 / Tp8T 6331).